The chain runs to 194 residues: uncharacterized protein (194 aa).

One can recognise an SIS domain in the interval 34 to 192 (VMQCLLGGNK…CELVDQTLFP (159 aa)).

It belongs to the SIS family. DiaA subfamily.

This is an uncharacterized protein from Haemophilus influenzae (strain ATCC 51907 / DSM 11121 / KW20 / Rd).